The following is a 161-amino-acid chain: MKLAQFRILLLIATLVVAVDQLTKGLIVRCLKLHEALPVVPNFFDLVYVRNKGAAFGILANTEYRVPFFIITTSVAVVFLAWFYRQYRPDQVLGRCAVSLVLGGAIGNLIDRVRFGEVVDFLDVHWYQYHWPAFNVADSAICVGVGMLLLAQWRDGIRHQA.

Transmembrane regions (helical) follow at residues 64 to 84 (YRVPFFIITTSVAVVFLAWFY) and 92 to 114 (VLGRCAVSLVLGGAIGNLIDRVR). Active-site residues include D120 and D138. Residues 131-151 (WPAFNVADSAICVGVGMLLLA) form a helical membrane-spanning segment.

Belongs to the peptidase A8 family.

Its subcellular location is the cell inner membrane. It carries out the reaction Release of signal peptides from bacterial membrane prolipoproteins. Hydrolyzes -Xaa-Yaa-Zaa-|-(S,diacylglyceryl)Cys-, in which Xaa is hydrophobic (preferably Leu), and Yaa (Ala or Ser) and Zaa (Gly or Ala) have small, neutral side chains.. Its pathway is protein modification; lipoprotein biosynthesis (signal peptide cleavage). This protein specifically catalyzes the removal of signal peptides from prolipoproteins. This chain is Lipoprotein signal peptidase, found in Syntrophotalea carbinolica (strain DSM 2380 / NBRC 103641 / GraBd1) (Pelobacter carbinolicus).